We begin with the raw amino-acid sequence, 60 residues long: Large ribosomal subunit protein uL30 (60 aa).

The protein belongs to the universal ribosomal protein uL30 family. In terms of assembly, part of the 50S ribosomal subunit.

This chain is Large ribosomal subunit protein uL30, found in Desulfotalea psychrophila (strain LSv54 / DSM 12343).